The following is an 846-amino-acid chain: DNA mismatch repair protein MutS (846 aa).

An ATP-binding site is contributed by 610–617 (GPNMGGKS).

It belongs to the DNA mismatch repair MutS family.

This protein is involved in the repair of mismatches in DNA. It is possible that it carries out the mismatch recognition step. This protein has a weak ATPase activity. This chain is DNA mismatch repair protein MutS, found in Legionella pneumophila (strain Lens).